The following is a 121-amino-acid chain: Small ribosomal subunit protein uS13 (121 aa).

The tract at residues 96–121 (PVRGQNTKNNARTRKGKAVAIAGKKK) is disordered. Residues 106 to 121 (ARTRKGKAVAIAGKKK) show a composition bias toward basic residues.

Belongs to the universal ribosomal protein uS13 family. As to quaternary structure, part of the 30S ribosomal subunit. Forms a loose heterodimer with protein S19. Forms two bridges to the 50S subunit in the 70S ribosome.

In terms of biological role, located at the top of the head of the 30S subunit, it contacts several helices of the 16S rRNA. In the 70S ribosome it contacts the 23S rRNA (bridge B1a) and protein L5 of the 50S subunit (bridge B1b), connecting the 2 subunits; these bridges are implicated in subunit movement. Contacts the tRNAs in the A and P-sites. This chain is Small ribosomal subunit protein uS13, found in Streptococcus pyogenes serotype M3 (strain SSI-1).